Consider the following 520-residue polypeptide: Nonsense-mediated mRNA decay factor SMG9 (520 aa).

The interval 1 to 143 (MSESGHSQPG…KGEKEGQRPT (143 aa)) is disordered. N-acetylserine is present on Ser-2. Phosphoserine occurs at positions 2, 4, 7, 32, and 53. The span at 36-53 (GRERDYIAPWERERRDGS) shows a compositional bias: basic and acidic residues. Residues 78-94 (QPPPPAAPAAPPAPAPL) are compositionally biased toward pro residues. The segment covering 109–121 (GPAATTSTSTPEG) has biased composition (low complexity). Residues 122-133 (TAPPPPAAPVPP) are compositionally biased toward pro residues. Ser-451 carries the phosphoserine modification.

This sequence belongs to the SMG9 family. In terms of assembly, self-associates to form homodimers and forms heterodimers with SMG8; these assembly forms may represent SMG1C intermediate forms. Component of the SMG1C complex composed of SMG1, SMG8 and SMG9. Self-associates to form homodimers and forms heterodimers with SMG8; these assembly forms may represent SMG1C intermediate forms. Interacts with DHX34; the interaction is RNA-independent. In terms of processing, phosphorylated by SMG1.

Its function is as follows. Involved in nonsense-mediated decay (NMD) of mRNAs containing premature stop codons. Is recruited by release factors to stalled ribosomes together with SMG1 and SMG8 (forming the SMG1C protein kinase complex) and, in the SMG1C complex, is required for the efficient association between SMG1 and SMG8. Plays a role in brain, heart, and eye development. This is Nonsense-mediated mRNA decay factor SMG9 from Bos taurus (Bovine).